We begin with the raw amino-acid sequence, 1258 residues long: Phospholipid-transporting ATPase C887.12 (1258 aa).

Disordered regions lie at residues 1-41 (MARD…LGED) and 53-83 (YISSSGQNSTNPFLADTRIENSPLGSESKAN). At 1 to 183 (MARDVDNKQN…PKFLKEQFSK (183 aa)) the chain is on the cytoplasmic side. A compositionally biased stretch (polar residues) spans 53–64 (YISSSGQNSTNP). A helical membrane pass occupies residues 184–204 (YANLFFLFTAVVQQIPGITPV). At 205–208 (NRYT) the chain is on the lumenal side. A helical transmembrane segment spans residues 209 to 229 (TIGPMLIVLSVSGIKEIMEDI). Residues 230–406 (KRKKQDQELN…TSVEKQVNSQ (177 aa)) lie on the Cytoplasmic side of the membrane. Residues 407–427 (ILFLLCIFVFLCFASSLGALI) form a helical membrane-spanning segment. At 428–451 (HRSVYGSALSYVKYTSNRAGMFFK) the chain is on the lumenal side. Residues 452–472 (GLLTFWILYSNLVPISLFVTF) traverse the membrane as a helical segment. The Cytoplasmic segment spans residues 473 to 974 (ELVRYIQAQL…KLILYSFYKN (502 aa)). Catalysis depends on Asp518, which acts as the 4-aspartylphosphate intermediate. The ATP site is built by Asp518, Lys519, Thr520, Glu613, Phe654, Ser656, Lys659, Lys677, Arg710, Thr711, Thr790, Gly791, Asp792, Arg883, and Lys889. Asp518 is a Mg(2+) binding site. Residue Thr520 participates in Mg(2+) binding. Asp909 is a binding site for Mg(2+). Residues Asn912 and Asp913 each coordinate ATP. Asp913 provides a ligand contact to Mg(2+). Residues 975–995 (IALYMTQFWYAFCNAFSGQVI) form a helical membrane-spanning segment. The Lumenal portion of the chain corresponds to 996–998 (FES). The chain crosses the membrane as a helical span at residues 999 to 1019 (WSISLYNVLFTVLPPVVIGIF). Residues 1020-1051 (DQFVSAGQLFQYPQLYQLGQRSEFFNLKRFWS) are Cytoplasmic-facing. The helical transmembrane segment at 1052 to 1072 (WITNGFYHSLLLFLCSIAVFY) threads the bilayer. Residues 1073–1086 (YDGPNKDGLASGHW) lie on the Lumenal side of the membrane. The helical transmembrane segment at 1087-1107 (VWGTTLYAAILATVLGKAALI) threads the bilayer. Lys1103 contributes to the a 1,2-diacyl-sn-glycero-3-phospho-(1D-myo-inositol 4-phosphate) binding site. Topologically, residues 1108–1115 (SNHWTQYT) are cytoplasmic. Residues 1116–1136 (VIATLGSFLLWIVFMPIYAVA) form a helical membrane-spanning segment. Topologically, residues 1137–1148 (APAIGFSKEYYG) are lumenal. A helical transmembrane segment spans residues 1149–1169 (IIPHLYGNLKFWASLLVLPTI). Residues 1170–1258 (ALMRDFVWKY…HTRGAYGEMR (89 aa)) are Cytoplasmic-facing. Positions 1173, 1177, 1178, 1189, and 1190 each coordinate a 1,2-diacyl-sn-glycero-3-phospho-(1D-myo-inositol 4-phosphate).

The protein belongs to the cation transport ATPase (P-type) (TC 3.A.3) family. Type IV subfamily. Mg(2+) serves as cofactor.

It is found in the endoplasmic reticulum membrane. It localises to the golgi apparatus. Its subcellular location is the trans-Golgi network membrane. The enzyme catalyses ATP + H2O + phospholipidSide 1 = ADP + phosphate + phospholipidSide 2.. It carries out the reaction a 1,2-diacyl-sn-glycero-3-phospho-L-serine(out) + ATP + H2O = a 1,2-diacyl-sn-glycero-3-phospho-L-serine(in) + ADP + phosphate + H(+). The catalysed reaction is a 1,2-diacyl-sn-glycero-3-phosphoethanolamine(out) + ATP + H2O = a 1,2-diacyl-sn-glycero-3-phosphoethanolamine(in) + ADP + phosphate + H(+). Catalytic component of a P4-ATPase flippase complex which catalyzes the hydrolysis of ATP coupled to the transport of phosphatidylserine and small amounts of ethanolamine from the lumen to the cytosolic leaflet of the trans-Golgi network and ensures the maintenance of asymmetric distribution of phospholipids. This is Phospholipid-transporting ATPase C887.12 from Schizosaccharomyces pombe (strain 972 / ATCC 24843) (Fission yeast).